Consider the following 199-residue polypeptide: MLLSDRDIRAEIAAGRLGVEPLLENLIQPSSIDVRLDRMFRVFDNSRYTHIDPAQRQDELTSLVEPGEGEPFVLHPGEFVLGSTLEVCTLPDDLAGRLEGKSSLGRLGLLTHSTAGFIDPGFSGHITLELSNVANLPITLWPGMKIGQLCLFRLSSPAEHPYGSAAAGSKYQGQRGPTPSRSYLNFPLPSDAVDAVESR.

Residues 101–106, D119, 127–129, Q148, Y162, and Q174 each bind dCTP; these read KSSLGR and TLE. E129 acts as the Proton donor/acceptor in catalysis. Residues 163–199 are disordered; sequence GSAAAGSKYQGQRGPTPSRSYLNFPLPSDAVDAVESR. Positions 171–183 are enriched in polar residues; that stretch reads YQGQRGPTPSRSY.

Belongs to the dCTP deaminase family. In terms of assembly, homotrimer.

The enzyme catalyses dCTP + 2 H2O = dUMP + NH4(+) + diphosphate. The protein operates within pyrimidine metabolism; dUMP biosynthesis; dUMP from dCTP: step 1/1. Functionally, bifunctional enzyme that catalyzes both the deamination of dCTP to dUTP and the hydrolysis of dUTP to dUMP without releasing the toxic dUTP intermediate. In Nocardia farcinica (strain IFM 10152), this protein is dCTP deaminase, dUMP-forming.